Reading from the N-terminus, the 466-residue chain is ATP synthase subunit beta (466 aa).

155 to 162 is an ATP binding site; sequence GGAGVGKT.

The protein belongs to the ATPase alpha/beta chains family. As to quaternary structure, F-type ATPases have 2 components, CF(1) - the catalytic core - and CF(0) - the membrane proton channel. CF(1) has five subunits: alpha(3), beta(3), gamma(1), delta(1), epsilon(1). CF(0) has three main subunits: a(1), b(2) and c(9-12). The alpha and beta chains form an alternating ring which encloses part of the gamma chain. CF(1) is attached to CF(0) by a central stalk formed by the gamma and epsilon chains, while a peripheral stalk is formed by the delta and b chains.

It is found in the cell inner membrane. The enzyme catalyses ATP + H2O + 4 H(+)(in) = ADP + phosphate + 5 H(+)(out). Functionally, produces ATP from ADP in the presence of a proton gradient across the membrane. The catalytic sites are hosted primarily by the beta subunits. In Bordetella avium (strain 197N), this protein is ATP synthase subunit beta.